Reading from the N-terminus, the 717-residue chain is Mitochondrial potassium channel ATP-binding subunit (717 aa).

The transit peptide at 1–25 (MLVHLFRFGIRGGPVPGWSLQSLRF) directs the protein to the mitochondrion. 4 helical membrane passes run 127-147 (LLALGAAIVLALGAALVNVQI), 178-198 (VQLLLLYGVQGLLTFGYLVLL), 278-298 (LMLAVVTPALMGVGTLMGSGL), and 365-385 (NIAFNCMVLGTLFIGGSLVAG). The ABC transmembrane type-1 domain maps to 132–419 (AAIVLALGAA…LSVLFGQVVR (288 aa)). One can recognise an ABC transporter domain in the interval 454 to 691 (ITFQNVTFSY…GGLYSELIRR (238 aa)). 489 to 496 (GQSGGGKT) contributes to the ATP binding site. A disordered region spans residues 695 to 717 (DASLTSTPPAEKPEDPKSCQSKA).

Belongs to the ABC transporter superfamily. ABCB family. Multidrug resistance exporter (TC 3.A.1.201) subfamily. In terms of assembly, the mitochondrial potassium channel (mitoK(ATP)) is composed of 4 subunits of CCDC51/MITOK and 4 subunits of ABCB8/MITOSUR. Interacts with PAAT. Interacts with NRP1; NRP1 regulates ABCB8/MITOSUR protein levels in mitochondria.

The protein localises to the mitochondrion inner membrane. Its activity is regulated as follows. Channel activity inhibited by ATP via ABCB8/MITOSUR subunit. Functionally, ATP-binding subunit of the mitochondrial ATP-gated potassium channel (mitoK(ATP)). Together with pore-forming subunit CCDC51/MITOK of the mitoK(ATP) channel, mediates ATP-dependent potassium currents across the mitochondrial inner membrane. An increase in ATP intracellular levels closes the channel, inhibiting K(+) transport, whereas a decrease in ATP levels enhances K(+) uptake in the mitochondrial matrix. Plays a role in mitochondrial iron transport. Required for maintenance of normal cardiac function, possibly by influencing mitochondrial iron export and regulating the maturation of cytosolic iron sulfur cluster-containing enzymes. The chain is Mitochondrial potassium channel ATP-binding subunit from Mus musculus (Mouse).